Consider the following 434-residue polypeptide: Histidine--tRNA ligase (434 aa).

The disordered stretch occupies residues D412–V434.

Belongs to the class-II aminoacyl-tRNA synthetase family.

Its subcellular location is the cytoplasm. The catalysed reaction is tRNA(His) + L-histidine + ATP = L-histidyl-tRNA(His) + AMP + diphosphate + H(+). The chain is Histidine--tRNA ligase from Haloquadratum walsbyi (strain DSM 16790 / HBSQ001).